The primary structure comprises 270 residues: Phosphoserine phosphatase (270 aa).

Residue Asp-67 is the Nucleophile of the active site. Residues Asp-67 and Asp-69 each coordinate Mg(2+). Catalysis depends on Asp-69, which acts as the Proton donor. Substrate-binding positions include Glu-76, Arg-112, 156–157 (SG), and Lys-205. Residue Asp-227 coordinates Mg(2+).

This sequence belongs to the HAD-like hydrolase superfamily. SerB family. Requires Mg(2+) as cofactor.

It catalyses the reaction O-phospho-L-serine + H2O = L-serine + phosphate. It carries out the reaction O-phospho-D-serine + H2O = D-serine + phosphate. It functions in the pathway amino-acid biosynthesis; L-serine biosynthesis; L-serine from 3-phospho-D-glycerate: step 3/3. Its function is as follows. Catalyzes the last step in the biosynthesis of serine from carbohydrates. The reaction mechanism proceeds via the formation of a phosphoryl-enzyme intermediates. The polypeptide is Phosphoserine phosphatase (aay) (Drosophila melanogaster (Fruit fly)).